Reading from the N-terminus, the 172-residue chain is Myosin regulatory light chain 12B (172 aa).

A compositionally biased stretch (basic residues) spans 1 to 16 (MSSKKAKTKTTKKRPQ). A disordered region spans residues 1 to 20 (MSSKKAKTKTTKKRPQRATS). Threonine 19 is modified (phosphothreonine; by MLCK and ZIPK/DAPK3). Position 20 is a phosphoserine; by MLCK and ZIPK/DAPK3 (serine 20). EF-hand domains lie at 29-64 (SQIQ…LGKN), 98-133 (DPED…MGDR), and 134-169 (FTDE…GAKD). Ca(2+)-binding residues include aspartate 42, asparagine 44, aspartate 46, and aspartate 53.

Myosin is a hexamer of 2 heavy chains and 4 light chains: interacts with myosin heavy chain MYO19. Post-translationally, phosphorylation increases the actin-activated myosin ATPase activity and thereby regulates the contractile activity. It is required to generate the driving force in the migration of the cells but not necessary for localization of myosin-2 at the leading edge. Phosphorylation is reduced following epigallocatechin-3-O-gallate treatment.

Myosin regulatory subunit that plays an important role in regulation of both smooth muscle and nonmuscle cell contractile activity via its phosphorylation. Phosphorylation triggers actin polymerization in vascular smooth muscle. Implicated in cytokinesis, receptor capping, and cell locomotion. The polypeptide is Myosin regulatory light chain 12B (Myl12b) (Rattus norvegicus (Rat)).